Here is a 241-residue protein sequence, read N- to C-terminus: Cobalt transport protein CbiM (241 aa).

The signal sequence occupies residues 1 to 23; the sequence is MKKNLTFFMVIALLFTITPNVYA. 6 helical membrane passes run 29–49, 66–86, 98–118, 121–141, 160–180, and 202–222; these read GFLP…FIII, MLLG…IPSV, LSAI…VLIF, ILLA…MGIM, VAVF…TSVQ, and IFSI…VIIF.

It belongs to the CbiM family. As to quaternary structure, forms an energy-coupling factor (ECF) transporter complex composed of an ATP-binding protein (A component, CbiO), a transmembrane protein (T component, CbiQ) and 2 possible substrate-capture proteins (S components, CbiM and CbiN) of unknown stoichimetry.

The protein localises to the cell membrane. It functions in the pathway cofactor biosynthesis; adenosylcobalamin biosynthesis. In terms of biological role, part of the energy-coupling factor (ECF) transporter complex CbiMNOQ involved in cobalt import. This is Cobalt transport protein CbiM from Clostridium tetani (strain Massachusetts / E88).